We begin with the raw amino-acid sequence, 1173 residues long: SMC5-SMC6 complex localization factor protein 2 (1173 aa).

The disordered stretch occupies residues M1–S109. 2 stretches are compositionally biased toward basic and acidic residues: residues K39 to S50 and Q88 to P106. An APIM motif motif is present at residues S137–I149. Disordered regions lie at residues M161–S230, Q256–L275, E280–K373, K394–T620, and T635–G663. Over residues E181–K199 the composition is skewed to basic and acidic residues. 2 stretches are compositionally biased toward low complexity: residues S212–S221 and N262–L275. The segment covering E280–N293 has biased composition (basic and acidic residues). Over residues S317–N330 the composition is skewed to polar residues. Basic and acidic residues-rich tracts occupy residues N339–R349 and K355–K373. A compositionally biased stretch (polar residues) spans P409–V428. A Phosphoserine modification is found at S481. A compositionally biased stretch (basic and acidic residues) spans S499–K520. The segment covering A571–A592 has biased composition (low complexity). Residues D602–E619 are compositionally biased toward acidic residues. Residues S603, S607, and S614 each carry the phosphoserine modification. The interval T635–S1173 is interaction with SIMC1. Positions T664–H1166 are NSE6-like domain. The required for interaction with SLF1 and RAD18 stretch occupies residues P702 to S1173.

The protein belongs to the FAM178 family. In terms of assembly, forms a heterodimer with SIMC1. Interacts with SLF1 (via N-terminus); this interaction links RAD18 to the SMC5-SMC6 complex. Interacts with RAD18; this interaction is increased in a SLF1-dependent manner. Interacts with SMC5 and SMC6. As to expression, widely expressed. Expressed at higher level in skeletal muscle and at slightly lower level in brain, liver and heart, than in lung, kidney, spleen and thymus.

The protein resides in the nucleus. Its subcellular location is the PML body. Plays a role in the DNA damage response (DDR) pathway by regulating postreplication repair of UV-damaged DNA and genomic stability maintenance. The SLF1-SLF2 complex acts to link RAD18 with the SMC5-SMC6 complex at replication-coupled interstrand cross-links (ICL) and DNA double-strand breaks (DSBs) sites on chromatin during DNA repair in response to stalled replication forks. Promotes the recruitment of the SMC5-SMC6 complex to DNA lesions. Plays a role in SMC5-SMC6 complex recruitment for viral restriction. Forms a complex with SIMC1 and this complex is required to recruit SMC5-SMC6 complex to PML nuclear bodies and sites of viral replication. The polypeptide is SMC5-SMC6 complex localization factor protein 2 (Homo sapiens (Human)).